The primary structure comprises 593 residues: High affinity cGMP-specific 3',5'-cyclic phosphodiesterase 9A (593 aa).

The tract at residues 87 to 142 (SAGVEDKRTTSRGQSAERPLRDRRVVGLEQPRREGAFESGQVEPRPREPQGCCQEG) is disordered. Residues 104 to 122 (RPLRDRRVVGLEQPRREGA) are compositionally biased toward basic and acidic residues. The 322-residue stretch at 236–557 (PRRDVPTYPK…DRYEELKRID (322 aa)) folds into the PDEase domain. Histidine 312 serves as the catalytic Proton donor. A 3',5'-cyclic GMP-binding site is contributed by 312-316 (HNFRH). The Zn(2+) site is built by histidine 316, histidine 352, and aspartate 353. A 3',5'-cyclic GMP-binding site is contributed by aspartate 353. Aspartate 353 is a binding site for Mg(2+). Position 379 is a phosphoserine (serine 379). Residues aspartate 462, tyrosine 484, and 512 to 513 (AQ) contribute to the 3',5'-cyclic GMP site. A Zn(2+)-binding site is contributed by aspartate 462. The disordered stretch occupies residues 564–593 (QKKTDSLTSGATEKSRERSRDVKNSEGDCA). Residues 576 to 593 (EKSRERSRDVKNSEGDCA) are compositionally biased toward basic and acidic residues.

The protein belongs to the cyclic nucleotide phosphodiesterase family. PDE9 subfamily. In terms of assembly, homodimer. The cofactor is Zn(2+). Mg(2+) serves as cofactor.

Its subcellular location is the cell projection. It localises to the ruffle membrane. The protein resides in the cytoplasm. The protein localises to the perinuclear region. It is found in the golgi apparatus. Its subcellular location is the endoplasmic reticulum. It localises to the cell membrane. The protein resides in the sarcolemma. It carries out the reaction 3',5'-cyclic GMP + H2O = GMP + H(+). The protein operates within purine metabolism; 3',5'-cyclic GMP degradation; GMP from 3',5'-cyclic GMP: step 1/1. Specifically inhibited by a compound named 3r ((R)-2-((1-cyclopentyl-4-hydroxy-1H-pyrazolo[3,4-d]pyrimidin-6- yl)amino)-N-(4-methoxyphenyl)propanamide); the inhibitor forms a hydrogen bond with Tyr-484, Ala-512 and Gln-513. Functionally, specifically hydrolyzes the second messenger cGMP, which is a key regulator of many important physiological processes. Highly specific: compared to other members of the cyclic nucleotide phosphodiesterase family, has the highest affinity and selectivity for cGMP. Specifically regulates natriuretic-peptide-dependent cGMP signaling in heart, acting as a regulator of cardiac hypertrophy in myocytes and muscle. Does not regulate nitric oxide-dependent cGMP in heart. Additional experiments are required to confirm whether its ability to hydrolyze natriuretic-peptide-dependent cGMP is specific to heart or is a general feature of the protein. In brain, involved in cognitive function, such as learning and long-term memory. The chain is High affinity cGMP-specific 3',5'-cyclic phosphodiesterase 9A (PDE9A) from Pan troglodytes (Chimpanzee).